A 580-amino-acid polypeptide reads, in one-letter code: Threonine--tRNA ligase (580 aa).

The interval 179–476 is catalytic; the sequence is DHRKIGKDLN…LLEQTKGILP (298 aa). Zn(2+) is bound by residues Cys-272, His-323, and His-453.

The protein belongs to the class-II aminoacyl-tRNA synthetase family. As to quaternary structure, homodimer. Zn(2+) is required as a cofactor.

It localises to the cytoplasm. The catalysed reaction is tRNA(Thr) + L-threonine + ATP = L-threonyl-tRNA(Thr) + AMP + diphosphate + H(+). In terms of biological role, catalyzes the attachment of threonine to tRNA(Thr) in a two-step reaction: L-threonine is first activated by ATP to form Thr-AMP and then transferred to the acceptor end of tRNA(Thr). Also edits incorrectly charged L-seryl-tRNA(Thr). This Ureaplasma parvum serovar 3 (strain ATCC 27815 / 27 / NCTC 11736) protein is Threonine--tRNA ligase.